The primary structure comprises 161 residues: Crossover junction endodeoxyribonuclease RuvC (161 aa).

Catalysis depends on residues Asp-9, Glu-72, and Asp-144. Mg(2+)-binding residues include Asp-9, Glu-72, and Asp-144.

Belongs to the RuvC family. Homodimer which binds Holliday junction (HJ) DNA. The HJ becomes 2-fold symmetrical on binding to RuvC with unstacked arms; it has a different conformation from HJ DNA in complex with RuvA. In the full resolvosome a probable DNA-RuvA(4)-RuvB(12)-RuvC(2) complex forms which resolves the HJ. Mg(2+) is required as a cofactor.

The protein resides in the cytoplasm. The catalysed reaction is Endonucleolytic cleavage at a junction such as a reciprocal single-stranded crossover between two homologous DNA duplexes (Holliday junction).. In terms of biological role, the RuvA-RuvB-RuvC complex processes Holliday junction (HJ) DNA during genetic recombination and DNA repair. Endonuclease that resolves HJ intermediates. Cleaves cruciform DNA by making single-stranded nicks across the HJ at symmetrical positions within the homologous arms, yielding a 5'-phosphate and a 3'-hydroxyl group; requires a central core of homology in the junction. The consensus cleavage sequence is 5'-(A/T)TT(C/G)-3'. Cleavage occurs on the 3'-side of the TT dinucleotide at the point of strand exchange. HJ branch migration catalyzed by RuvA-RuvB allows RuvC to scan DNA until it finds its consensus sequence, where it cleaves and resolves the cruciform DNA. This is Crossover junction endodeoxyribonuclease RuvC from Synechococcus sp. (strain ATCC 27144 / PCC 6301 / SAUG 1402/1) (Anacystis nidulans).